Consider the following 184-residue polypeptide: UPF0397 protein SA2477 (184 aa).

The next 5 membrane-spanning stretches (helical) occupy residues 11-31 (VVAI…VVIP), 44-64 (AFLA…TGLV), 77-97 (AWWS…WIGL), 111-131 (MIYF…LIAP), and 148-168 (QGVI…TILL).

This sequence belongs to the UPF0397 family.

Its subcellular location is the cell membrane. The chain is UPF0397 protein SA2477 from Staphylococcus aureus (strain N315).